Consider the following 407-residue polypeptide: Transmembrane protein 184B (407 aa).

Residues 1 to 24 (MTVRGAALAPDPASPTTAAASPSI) are disordered. 7 helical membrane-spanning segments follow: residues 40–60 (FLMT…ALLI), 84–104 (ILFI…FFTN), 121–141 (LVIY…SSIM), 178–198 (LQFC…QAFG), 214–234 (VTII…LFYF), 249–269 (FFMV…LAIL), and 290–310 (VAAG…ALAL). Residues 369–395 (TLEPGPTWRGGAHGLSRSHSLSGARDN) are disordered. Serine 388, serine 402, and serine 403 each carry phosphoserine.

Belongs to the TMEM184 family.

It is found in the membrane. Functionally, may activate the MAP kinase signaling pathway. The sequence is that of Transmembrane protein 184B (TMEM184B) from Bos taurus (Bovine).